Consider the following 161-residue polypeptide: Nucleotide-binding protein PFLU_4927 (161 aa).

This sequence belongs to the YajQ family.

Its function is as follows. Nucleotide-binding protein. The chain is Nucleotide-binding protein PFLU_4927 from Pseudomonas fluorescens (strain SBW25).